Consider the following 255-residue polypeptide: 5-oxoprolinase subunit A 2 (255 aa).

The protein belongs to the LamB/PxpA family. Forms a complex composed of PxpA, PxpB and PxpC.

It catalyses the reaction 5-oxo-L-proline + ATP + 2 H2O = L-glutamate + ADP + phosphate + H(+). Its function is as follows. Catalyzes the cleavage of 5-oxoproline to form L-glutamate coupled to the hydrolysis of ATP to ADP and inorganic phosphate. The polypeptide is 5-oxoprolinase subunit A 2 (Agrobacterium fabrum (strain C58 / ATCC 33970) (Agrobacterium tumefaciens (strain C58))).